Consider the following 231-residue polypeptide: Killer cell lectin-like receptor subfamily F member 1 (231 aa).

The Cytoplasmic segment spans residues M1 to K38. Y7 is modified (phosphotyrosine). A helical; Signal-anchor for type II membrane protein membrane pass occupies residues I39–I59. At L60 to Y231 the chain is on the extracellular side. Residues N77, N91, N96, and N176 are each glycosylated (N-linked (GlcNAc...) asparagine). A C-type lectin domain is found at Y121–Q230. 2 cysteine pairs are disulfide-bonded: C142-C229 and C208-C221.

As to quaternary structure, homodimer. Interacts with CLEC2B. In terms of processing, phosphorylated on Tyr-7; this phosphorylation is required for NKp80/KLRF1-mediated cytotoxicity.

The protein resides in the membrane. In terms of biological role, functions as an activating receptor involved in immunosurveillance upon binding to various ligands displayed at the surface of myeloid cells. Upon interaction with CLEC2B ligand, stimulates NK-cell cytotoxicity and cytokine production leading to the cytolysis of malignant CLEC2B-expressing myeloid cells. Actviation of the common cytotoxicity pathway involves SRC and SYK kinases. This Macaca fascicularis (Crab-eating macaque) protein is Killer cell lectin-like receptor subfamily F member 1 (KLRF1).